A 323-amino-acid polypeptide reads, in one-letter code: Serine/threonine-protein phosphatase PP1 (323 aa).

Residues Asp-63, His-65, Asp-91, and Asn-123 each contribute to the Mn(2+) site. The Proton donor role is filled by His-124. 2 residues coordinate Mn(2+): His-172 and His-247.

This sequence belongs to the PPP phosphatase family. PP-1 subfamily. Mn(2+) is required as a cofactor.

The catalysed reaction is O-phospho-L-seryl-[protein] + H2O = L-seryl-[protein] + phosphate. It carries out the reaction O-phospho-L-threonyl-[protein] + H2O = L-threonyl-[protein] + phosphate. Functionally, plays an important role in the control of mitosis by reversing the action of the nimA kinase. This is Serine/threonine-protein phosphatase PP1 (bimG) from Emericella nidulans (strain FGSC A4 / ATCC 38163 / CBS 112.46 / NRRL 194 / M139) (Aspergillus nidulans).